We begin with the raw amino-acid sequence, 210 residues long: MVQDIFSKSAVASVKAQRISPRKARLVADLIRYKTATQALIILQTTNKKASGIILKLLNSAIANATNNNGLDATKLVVTEILVNDGPTLKRYQPHSRGRAYPILKRTSHFFIRVSEVSLPSVNEMTSKETVKEPAKKPSAKVEKPAEAKAPKQETSTKKPTTTTESKPKTSKAPAQKQAAKVAKPAAEDTKKPVKKSTTTTKSTKKEGSK.

Residues 123-210 (NEMTSKETVK…TKSTKKEGSK (88 aa)) form a disordered region. Residues 126-157 (TSKETVKEPAKKPSAKVEKPAEAKAPKQETST) are compositionally biased toward basic and acidic residues. Low complexity predominate over residues 158–185 (KKPTTTTESKPKTSKAPAQKQAAKVAKP).

The protein belongs to the universal ribosomal protein uL22 family. In terms of assembly, part of the 50S ribosomal subunit.

This protein binds specifically to 23S rRNA; its binding is stimulated by other ribosomal proteins, e.g. L4, L17, and L20. It is important during the early stages of 50S assembly. It makes multiple contacts with different domains of the 23S rRNA in the assembled 50S subunit and ribosome. Its function is as follows. The globular domain of the protein is located near the polypeptide exit tunnel on the outside of the subunit, while an extended beta-hairpin is found that lines the wall of the exit tunnel in the center of the 70S ribosome. This chain is Large ribosomal subunit protein uL22, found in Metamycoplasma arthritidis (strain 158L3-1) (Mycoplasma arthritidis).